The primary structure comprises 613 residues: Laccase 1 (613 aa).

The N-terminal stretch at 1 to 20 (MSSSVRLLLIVALLYTNSWA) is a signal peptide. Plastocyanin-like domains follow at residues 29–142 (ITWE…IRPK), 171–359 (YLVV…MRVP), and 468–598 (DATC…ILDG). The N-linked (GlcNAc...) asparagine glycan is linked to asparagine 74. The Cu cation site is built by histidine 78, histidine 80, histidine 122, and histidine 124. Asparagine 256, asparagine 279, and asparagine 484 each carry an N-linked (GlcNAc...) asparagine glycan. Cu cation-binding residues include histidine 506, histidine 509, and histidine 511. A glycan (N-linked (GlcNAc...) asparagine) is linked at asparagine 526. Residues histidine 580, cysteine 581, histidine 582, and histidine 586 each contribute to the Cu cation site.

This sequence belongs to the multicopper oxidase family. The cofactor is Cu cation.

The protein resides in the cell surface. It functions in the pathway pigment biosynthesis. Its function is as follows. Laccase; part of the Pks1 gene cluster that mediates the biosynthesis of an anthraquinone derivative pigment that contributes to conidial pigmentation that provides protection from UV radiation, heat and cold stress. The polyketide synthase Pks1 produces 1-acetyl-2,4,6,8-tetrahydroxy-9,10-anthraquinone though condensation of acetyl-CoA with malonyl-CoA. The dehydratase EthD and the laccase Mlac1 further convert the anthraquinone derivative into the final conidial pigment. In Metarhizium acridum (strain CQMa 102), this protein is Laccase 1.